The chain runs to 105 residues: Small ribosomal subunit protein uS10 (105 aa).

Belongs to the universal ribosomal protein uS10 family. Part of the 30S ribosomal subunit.

Its function is as follows. Involved in the binding of tRNA to the ribosomes. This chain is Small ribosomal subunit protein uS10, found in Trichormus variabilis (strain ATCC 29413 / PCC 7937) (Anabaena variabilis).